Consider the following 348-residue polypeptide: Histidinol-phosphate aminotransferase (348 aa).

The disordered stretch occupies residues 1-31 (MLPTRDCVRQTPAYTPGEQPQTAGFTKLNTN). A compositionally biased stretch (polar residues) spans 18–31 (EQPQTAGFTKLNTN). Lys207 is subject to N6-(pyridoxal phosphate)lysine.

Belongs to the class-II pyridoxal-phosphate-dependent aminotransferase family. Histidinol-phosphate aminotransferase subfamily. Homodimer. Pyridoxal 5'-phosphate serves as cofactor.

It carries out the reaction L-histidinol phosphate + 2-oxoglutarate = 3-(imidazol-4-yl)-2-oxopropyl phosphate + L-glutamate. It participates in amino-acid biosynthesis; L-histidine biosynthesis; L-histidine from 5-phospho-alpha-D-ribose 1-diphosphate: step 7/9. This Microcystis aeruginosa (strain NIES-843 / IAM M-2473) protein is Histidinol-phosphate aminotransferase.